We begin with the raw amino-acid sequence, 417 residues long: Gamma-glutamyl phosphate reductase (417 aa).

This sequence belongs to the gamma-glutamyl phosphate reductase family.

The protein localises to the cytoplasm. The catalysed reaction is L-glutamate 5-semialdehyde + phosphate + NADP(+) = L-glutamyl 5-phosphate + NADPH + H(+). Its pathway is amino-acid biosynthesis; L-proline biosynthesis; L-glutamate 5-semialdehyde from L-glutamate: step 2/2. Its function is as follows. Catalyzes the NADPH-dependent reduction of L-glutamate 5-phosphate into L-glutamate 5-semialdehyde and phosphate. The product spontaneously undergoes cyclization to form 1-pyrroline-5-carboxylate. The polypeptide is Gamma-glutamyl phosphate reductase (Haemophilus influenzae (strain PittEE)).